A 768-amino-acid chain; its full sequence is Histone-lysine N-methyltransferase, H3 lysine-36 specific (768 aa).

Positions 45–90 constitute an AWS domain; that stretch reads AEVMACDCKPGPTACDEDSGCINRLTSIECVRCCKGCQNKRFQGKK. The SET domain maps to 92–209; that stretch reads ASVDVISTEK…RGEEVTFDYN (118 aa). One can recognise a Post-SET domain in the interval 216–232; it reads EAQACYCGEKNCVGFLG. Residues 411–452 show a composition bias toward basic and acidic residues; sequence KIDPDGDEHSVSRGTSEEVTKESSKSEEPNDVEVVKVNKKAD. Disordered stretches follow at residues 411 to 508, 533 to 610, and 680 to 768; these read KIDP…KGWQ, KASR…VNAQ, and VVKR…IDLE. Polar residues predominate over residues 453-469; it reads NNGNGVTDSPSTRSESP. The WW domain occupies 501–534; sequence RSLPKGWQFANDPQGKVYYYNLELNIQQWDFPKA. Basic and acidic residues-rich tracts occupy residues 555-568, 682-734, and 755-768; these read NRRDERRDNSETRE, KRLE…KGEE, and TVKKPKVDMEIDLE.

Belongs to the class V-like SAM-binding methyltransferase superfamily. Histone-lysine methyltransferase family. SET2 subfamily.

Its subcellular location is the nucleus. The protein resides in the chromosome. The catalysed reaction is L-lysyl(36)-[histone H3] + 3 S-adenosyl-L-methionine = N(6),N(6),N(6)-trimethyl-L-lysyl(36)-[histone H3] + 3 S-adenosyl-L-homocysteine + 3 H(+). Its function is as follows. Histone methyltransferase that trimethylates histone H3 'Lys-36' forming H3K36me3. Involved in transcription elongation as well as in transcription repression. The protein is Histone-lysine N-methyltransferase, H3 lysine-36 specific (set-2) of Yarrowia lipolytica (strain CLIB 122 / E 150) (Yeast).